Reading from the N-terminus, the 400-residue chain is Spermatogenic leucine zipper protein 1 (400 aa).

The tract at residues 1-27 is disordered; that stretch reads MADSDSSSEMPAHSPSPSPIPCAKQKP. The residue at position 106 (serine 106) is a Phosphoserine. Residues 116 to 127 are helix-loop-helix motif; sequence RNKLRFKDDLFI. The basic motif stretch occupies residues 128–193; the sequence is HFDPERENTM…HIRGEYRKLR (66 aa). 2 coiled-coil regions span residues 182–231 and 268–293; these read SVHI…KDIV and LIAALLENECQILQQRVDILRELHLH. Position 207 is a phosphoserine (serine 207). The tract at residues 252–273 is leucine-zipper; it reads LEEQVKKLSQDTHSLHLIAALL. The disordered stretch occupies residues 295–332; the sequence is AGPGHEKPLQTSGEQDKKCGEQDKKCGEQDKKCGEQDK.

As to quaternary structure, interacts with PPP1CC isoform gamma-2. In terms of processing, phosphorylated by MAPK1/ERK2 and MAPK3/ERK1.

It is found in the cytoplasm. Its subcellular location is the nucleus. In terms of biological role, transcription factor that binds to the DNA sequence 5'-CANNTG-3'(E box) and the G-box motif. May play an important role in the regulation of cell proliferation and differentiation during spermatogenesis. The sequence is that of Spermatogenic leucine zipper protein 1 (Spz1) from Rattus norvegicus (Rat).